The following is a 788-amino-acid chain: Autophagy-related protein 9 (788 aa).

Residues 1-171 (MTDKSTFLSV…EAYMYYTGKG (171 aa)) are Cytoplasmic-facing. Residues 32–42 (ILRRVEEEHAQ) show a composition bias toward basic and acidic residues. Residues 32–127 (ILRRVEEEHA…TGVANGGLPR (96 aa)) form a disordered region. Residues 44–58 (SDNSNSDNDSGNDSD) show a composition bias toward low complexity. A compositionally biased stretch (polar residues) spans 101–112 (SFAQGTKTQTPI). Residues 172–192 (LVSIILSRVLNMSTIMFVVVF) traverse the membrane as a helical segment. The Lumenal portion of the chain corresponds to 193 to 222 (STYLGSCIDYSKIKGSRTLDEVHVKQCYAK). The helical transmembrane segment at 223–243 (LGSFHVFVLWTFFVLWFMKLF) threads the bilayer. Over 244–390 (QYVKDIRRLV…QILSTGLRRR (147 aa)) the chain is Cytoplasmic. Phe391 is an intramembrane region. Residues 392 to 479 (VFAAIMNVVF…PKEKTALVSK (88 aa)) lie on the Cytoplasmic side of the membrane. Residues 480–500 (FVSFIAGSFAAVLGIASLIDP) traverse the membrane as a helical segment. The Lumenal segment spans residues 501–512 (ELFLMFEISANR). The chain crosses the membrane as a helical span at residues 513-533 (TVLFYIGVFGSILAVSRSLIP). Topologically, residues 534–579 (EETLVFDPEISLRYVAEFTHYLPPEWEGKLHTEQVKNEFSLMYEMR) are cytoplasmic. Residues 580-600 (LIILLKELASIFLAPFILYYS) lie within the membrane without spanning it. Residues 601–788 (LTQSCDDIVD…KKTDNMNLGA (188 aa)) are Cytoplasmic-facing. A disordered region spans residues 715 to 736 (LSPAAPTATTATSGTATGAAPR). Low complexity predominate over residues 716 to 734 (SPAAPTATTATSGTATGAA).

The protein belongs to the ATG9 family. In terms of assembly, homotrimer; forms a homotrimer with a central pore that forms a path between the two membrane leaflets. Phosphorylated by ATG1. ATG1 phosphorylation is required for preautophagosome elongation.

The protein resides in the preautophagosomal structure membrane. The protein localises to the cytoplasmic vesicle membrane. It is found in the golgi apparatus membrane. Its subcellular location is the endoplasmic reticulum membrane. It catalyses the reaction a 1,2-diacyl-sn-glycero-3-phosphocholine(in) = a 1,2-diacyl-sn-glycero-3-phosphocholine(out). The enzyme catalyses a 1,2-diacyl-sn-glycero-3-phospho-L-serine(in) = a 1,2-diacyl-sn-glycero-3-phospho-L-serine(out). The catalysed reaction is a 1,2-diacyl-sn-glycero-3-phosphoethanolamine(in) = a 1,2-diacyl-sn-glycero-3-phosphoethanolamine(out). It carries out the reaction a 1,2-diacyl-sn-glycero-3-phospho-(1D-myo-inositol-3-phosphate)(in) = a 1,2-diacyl-sn-glycero-3-phospho-(1D-myo-inositol-3-phosphate)(out). Functionally, phospholipid scramblase involved in autophagy and cytoplasm to vacuole transport (Cvt) vesicle formation. Cycles between the preautophagosomal structure/phagophore assembly site (PAS) and the cytoplasmic vesicle pool and supplies membrane for the growing autophagosome. Lipid scramblase activity plays a key role in preautophagosomal structure/phagophore assembly by distributing the phospholipids that arrive through ATG2 from the cytoplasmic to the luminal leaflet of the bilayer, thereby driving autophagosomal membrane expansion. Required for mitophagy. Also involved in endoplasmic reticulum-specific autophagic process and is essential for the survival of cells subjected to severe ER stress. Different machineries are required for anterograde trafficking to the PAS during either the Cvt pathway or bulk autophagy and for retrograde trafficking. This chain is Autophagy-related protein 9, found in Yarrowia lipolytica (strain CLIB 122 / E 150) (Yeast).